The chain runs to 1164 residues: DNA-directed RNA polymerase 132 kDa polypeptide (1164 aa).

The protein belongs to the RNA polymerase beta chain family. As to quaternary structure, the DNA-dependent RNA polymerase used for intermediate and late genes expression consists of eight subunits (147) kDa, (133) kDa, (35) kDa, (30) kDa, (22) kDa, (19) kDa, (18) kDa and (7) kDa totalling more than 500 kDa in mass. The same holoenzyme, with the addition of the transcription-specificity factor RAP94, is used for early gene expression.

It is found in the virion. It catalyses the reaction RNA(n) + a ribonucleoside 5'-triphosphate = RNA(n+1) + diphosphate. Its function is as follows. Part of the DNA-dependent RNA polymerase which catalyzes the transcription of viral DNA into RNA using the four ribonucleoside triphosphates as substrates. Responsible for the transcription of early, intermediate and late genes. DNA-dependent RNA polymerase associates with the early transcription factor (ETF), itself composed of D6 and A7, thereby allowing the early genes transcription. Late transcription, and probably also intermediate transcription, require newly synthesized RNA polymerase. The chain is DNA-directed RNA polymerase 132 kDa polypeptide (RPO132) from Mus musculus (Mouse).